The following is a 383-amino-acid chain: UDP-N-acetylenolpyruvoylglucosamine reductase (383 aa).

Residues 1–13 (MRTRRDVPADRSG) are compositionally biased toward basic and acidic residues. Positions 1–26 (MRTRRDVPADRSGRSRVSRHPGLSVP) are disordered. Residues 49–215 (LGGPATRLLT…LRVRFELENA (167 aa)) enclose the FAD-binding PCMH-type domain. The active site involves Arg192. The active-site Proton donor is Ser271. Glu375 is a catalytic residue.

Belongs to the MurB family. FAD serves as cofactor.

The protein localises to the cytoplasm. It catalyses the reaction UDP-N-acetyl-alpha-D-muramate + NADP(+) = UDP-N-acetyl-3-O-(1-carboxyvinyl)-alpha-D-glucosamine + NADPH + H(+). It functions in the pathway cell wall biogenesis; peptidoglycan biosynthesis. Cell wall formation. This is UDP-N-acetylenolpyruvoylglucosamine reductase from Streptomyces coelicolor (strain ATCC BAA-471 / A3(2) / M145).